Consider the following 233-residue polypeptide: Large ribosomal subunit protein uL1 (233 aa).

The protein belongs to the universal ribosomal protein uL1 family. In terms of assembly, part of the 50S ribosomal subunit.

In terms of biological role, binds directly to 23S rRNA. The L1 stalk is quite mobile in the ribosome, and is involved in E site tRNA release. Protein L1 is also a translational repressor protein, it controls the translation of the L11 operon by binding to its mRNA. This is Large ribosomal subunit protein uL1 from Shewanella sp. (strain ANA-3).